Here is a 236-residue protein sequence, read N- to C-terminus: 2,3,4,5-tetrahydropyridine-2,6-dicarboxylate N-acetyltransferase (236 aa).

Belongs to the transferase hexapeptide repeat family. DapH subfamily.

The catalysed reaction is (S)-2,3,4,5-tetrahydrodipicolinate + acetyl-CoA + H2O = L-2-acetamido-6-oxoheptanedioate + CoA. Its pathway is amino-acid biosynthesis; L-lysine biosynthesis via DAP pathway; LL-2,6-diaminopimelate from (S)-tetrahydrodipicolinate (acetylase route): step 1/3. Catalyzes the transfer of an acetyl group from acetyl-CoA to tetrahydrodipicolinate. In Clostridium perfringens (strain SM101 / Type A), this protein is 2,3,4,5-tetrahydropyridine-2,6-dicarboxylate N-acetyltransferase.